A 118-amino-acid chain; its full sequence is Large ribosomal subunit protein uL18 (118 aa).

This sequence belongs to the universal ribosomal protein uL18 family. Part of the 50S ribosomal subunit; part of the 5S rRNA/L5/L18/L25 subcomplex. Contacts the 5S and 23S rRNAs.

In terms of biological role, this is one of the proteins that bind and probably mediate the attachment of the 5S RNA into the large ribosomal subunit, where it forms part of the central protuberance. This chain is Large ribosomal subunit protein uL18, found in Campylobacter jejuni subsp. doylei (strain ATCC BAA-1458 / RM4099 / 269.97).